Reading from the N-terminus, the 3589-residue chain is MGSTTVEPVGSTYARPKPLGNLDHRIEQLLGSESVLNESPGHSPNAYGIPYTARNLTLEDVDHCKSLTNKDLSLEFWKSHLQTAKPCILTRLKPGTGSSILSSRQSVKVDLGGVNTTCRNLFDSTGISLMTVFKVAWGMVLSTYTGSDHVCFGYGAARPSMSVDGEQTTIKPLIKMLPCDMLFKGGTTLLGTVHKAESDFICTIPYQSVSIAEIHHGIGTESGALFNTSIIFWPQEDFSDNPITEVLSQKVTETESLTECDIIMHVDSKQQCYLSYWDYFLSDEQANHLAGALNVAMKSIFESPHRPVGQVEMFSYLDQQKLLQWNGQAPIASESCLGDLIGQNCHSRPDSLAVDSWDGFFTYQELDRLSSTLANKLRCAGVGPDVFVTACFDRCKWMPVAMLGIIKAGGAICALDPSYPLGRLTGMCQLLKSTVVLTTANNAQQAEQLALTTIVLGNDLWTGDSYDEQERQAPLSNVCPSNALYAVFTSGSTGKPKGVVVEHRSFSSCALASLKPLDIRPHDRVLHISSYAFDISIFETLATLTAGASVAIPSEKARREDLPGAMRELQATWAFLTPTVARMYQPKDFPSLRTLCLGGEAIHTSDIGLWASKNLVTGYNPAESCPLGISGPADKSAASFLGWSFSSQASWIVDPRDYQKLAPIGAVGELMIEGPAVARGYIHDLTCSHPDSPFVLPPPQWLSRFRASTSQDTRLYRTGDLVQYGSNGSVHFIGRKDLQVKVHGQRVELSEIEFQLHKTLLPLDCKVVVDAVTFTGHTSVIAFITAAEHSDLENEDDAVRSPDVKVITQDFEIRAADAATKLQSILPRHMVPTIYLPVGHIPMSRSGKIDRQKLRSLALSLPRETLYHIGRQPGPGEIVVTDVERRLQLLFAQVLDLSPEKIKADSDFFRLGGDSIYAMKLLALAPQQGPRDLTYEEIFRHPKLRDLAAASSSFSNISLAIPEDLGPAPFSLARDADSLTKIASEQCGVAVGDIEDIYPCTSLQESLIASTAHDQDAYVGVQSFTLNDDIDTTRLKMAWKMTSEGHPILRTRIIQTDSGAPYQAVIRGPLSWSEESSSDDLPPQFQPSIGLGTPLVQLCLTNSRLLVAMHHALYDGWSLPLLLAEVDQAYRQLSVRQLPPFNRYVKHVTETVDSAASFWKAELQDADPVDFPPLPHLNYKPEPRALLTKSITLTAHTNSQHNVTLATELQLAWALTSHTYTNSQDVVFGIISSGRGAPVAGIERMLGPTFASTPLRVPLDPAQDVREALEELQYRLAEQTKYVQIGLQRIRQQGPNAAAACSFQTMLVVEPNQPVKTQSAWFSRHEFLSELTRFSSHSLTLRCKLLAGSVEVTAIYDQLVVPDAQMQRILSQFQHILTQIQGIGSRDTTIGDIDRLSSGDWNELQAWNSTLPPGLELSVHQMVQAKAQMQPEALAIHSWDGDLTYKELEDYAKGLANRLHALGVRPNTFVAIYLQKSLWVVVAQLAVLIAGAAFTTLETSQPINRLRDVCRTVQPTVVLTSDKLRLSGADLEVPAPLLVINQQLLLEEPGSHSRPLENHTIMASDAMYSIATSGTTGKPKVVVIEHQAFLANSKHLIDRWGFTADSRVLQFAGYSFDAMIVEHFITLLAGGCICIPSSFDRDNRLATCIVEMRVNWAMLTSSVIPLFTPAAVPTLQTLVQAGEPMHQGITDCWASHVQLFNAYGPTECSVISTTSNIINPDARNPRNIGFTTGGVCWIVDPENPESPPVPIGAEGELIIEGAILARGYLGDRVRTAAAFTLRPGWLDDFRGSSGDNRIYRTGDIVRYDPDGSISYVRRKDSQVKLRGQRVELLDVEHHLQNCFPGALQVVADIVTVPNTQSSALVALVLATPTSSSSVAIESCSNDDQATTAHGLLLLANNPQFLIDASAAELALQDRVPSYMVPSLFIPTSRFPRDVSGKVNRGEITRSLAALSRQEWDGYVSTNRVAPTSGLERELQKIWARILNIPPDTIGVHDSFFRLGGDSITCMQVAAQCSRTGILITVKDIFKRRTIEKLAAAAVVVQCPESSTTERVNTAEAKFSFYGPGQLEEYMIQIQPQLGEGQVVEDIYPCSPIQRGILMSHARNSGNYEEVIQWKVISRAPVDVCRLRDAWAQVVDRHAVLRTLFLHVCKENYLDQVVLRSHSPMVLVYNEGEEPVNPVSTGCSQPMHHLRVKRSSAGGITVRLHINHALVDGASLFIIRRDLAMAYEGRLASSRASSPYRDYIAYLQNCHSQIQSNEYWQSYMEGTAPCLFPTLKNAGAQDSQQPFEAFTLQLGATADLNQFCENHRLALTSVLHVVWAMVVQRYTAMDEVCFGYMTSGRHVPVAGVQDIVGPLFNMLVARVGLPHDATLLSVMQKYHDNFLISLDHQHQSLAETLHSIGSASGELFNTLVSIFNDQREGEPAHKSSAVTLVGDDIHSRSEYAITLNVLMLADQVHIQLSYHTSWLSDNYARMIAETFRHVLATVLGQPQLRLNEIEMLDEEHRSGLYGRNHAAVPSFDSCIHYTIHQRCLESPESPAICAWDGDFSYRRLDQLSSSLAEELIGHGVGVEMTIPVLLEKTCWTPVAMLAVLKSGASFVLMDASHPLGRLQTICEAINPPVILASPQTRSKAVGLTSHVIEVTNRLLEQEQAEQQQTWPRVVTKGSNAAYVVFTSGSTGKPKGAIVDHSCLATAAGHLPSRMYINSASRVLQFSSHAWDIPVTDVLLTLRVGGCVCIPSDEERIGNLAQVANRMMVNWALLTPTVARLVKPEDFTHLQTLVLAGEAVSSTDLTTWHDKVRLIQGYGPAECSLVSTVSEPLTPSDNPRNIGQPNGCVAWVVHRDNHHLLAPSGAIEELVLEGPIVSRGYINDPERSAAVFVDPPTWLTRLRGGHSPTRLYKTGDLVSAGLDGCLSFVGRKDDQVKIRGQRVELGEVEALASQAFPGSHVVVETVKDLSSTILVAFILQKETAHAQPSSISSLLHPPSPLFRELISAASCSLRETMPSFMIPTVFLPLAHLPKAPTGKTDRKFLRGHVASLSRMELEAYSIVDATGRAPSTPLETRLQELVGRVLHRSPESIPLDEDLFTFGLDSLTAMTLATLVREDGLAISVPTIFQRPRLSELAVVLNQEQQIKQGQFLAPPPNALMASMDELCAQWQLDRSQVVNIAPTTYYQRGSLASHHTNFIALHFSQPLDPIPFRNAVVGLVQKHAILRTAFVPFRETFVQLILRDFDLPVQEIRTDEDDPSVVAESFCREADRVPVSFGTPITQLYMILGRAGDRLSAVLRLQRAQYDGVAVSCMIADLRSAFDEAPSSALPTLEYADYVISRRAHSSPPVFQVWRELLQGSSMTYLVPPTEYIRSTDRSRTELLVTSSCDIPMPDTKGGITMATVIKTAWALCLARQTQSKDVVFAQLVRNRHLAIAGIDRTVGPCINYVPVRASLNLDWTAKEFLHWVQRQHIRTMTCDMADWDDLVIESTSWPRDTELGSAVHYLSAPVASDYTFAGDVPCQFQMYDFKMVHTYPMVTCLPFPSVGDSSLTVLKIILTSAVFGQGVADRLLSLFRDMVHRLTTYPESLVSELLIIR.

The segment at 344-742 (NCHSRPDSLA…IGRKDLQVKV (399 aa)) is adenylation (A) domain 1. One can recognise a Carrier 1 domain in the interval 883-952 (VERRLQLLFA…KLRDLAAASS (70 aa)). O-(pantetheine 4'-phosphoryl)serine is present on Ser-915. The interval 995 to 1380 (EDIYPCTSLQ…SQFQHILTQI (386 aa)) is condensation (C) domain 1. Positions 1424 to 1826 (QAKAQMQPEA…RRKDSQVKLR (403 aa)) are adenylation (A) domain 2. In terms of domain architecture, Carrier 2 spans 1974–2042 (LERELQKIWA…TIEKLAAAAV (69 aa)). Position 2006 is an O-(pantetheine 4'-phosphoryl)serine (Ser-2006). The condensation (C) domain 2 stretch occupies residues 2087–2509 (VEDIYPCSPI…IEMLDEEHRS (423 aa)). Residues 2534–2929 (CLESPESPAI…GRKDDQVKIR (396 aa)) form an adenylation (A) domain 3 region. One can recognise a Carrier 3 domain in the interval 3064–3132 (LETRLQELVG…RLSELAVVLN (69 aa)). Residue Ser-3096 is modified to O-(pantetheine 4'-phosphoryl)serine. The segment at 3187 to 3585 (TNFIALHFSQ…TYPESLVSEL (399 aa)) is cyclization (Cyc) domain.

Belongs to the NRP synthetase family.

The protein operates within alkaloid biosynthesis; ergot alkaloid biosynthesis. Its function is as follows. D-lysergyl-peptide-synthetase subunit 1; part of the gene cluster that mediates the biosynthesis of fungal ergot alkaloid ergovaline, the predominant ergopeptine product in E.festucae var. lolii. DmaW catalyzes the first step of ergot alkaloid biosynthesis by condensing dimethylallyl diphosphate (DMAP) and tryptophan to form 4-dimethylallyl-L-tryptophan. The second step is catalyzed by the methyltransferase easF that methylates 4-dimethylallyl-L-tryptophan in the presence of S-adenosyl-L-methionine, resulting in the formation of 4-dimethylallyl-L-abrine. The catalase easC and the FAD-dependent oxidoreductase easE then transform 4-dimethylallyl-L-abrine to chanoclavine-I which is further oxidized by easD in the presence of NAD(+), resulting in the formation of chanoclavine-I aldehyde. Agroclavine dehydrogenase easG then mediates the conversion of chanoclavine-I aldehyde to agroclavine via a non-enzymatic adduct reaction: the substrate is an iminium intermediate that is formed spontaneously from chanoclavine-I aldehyde in the presence of glutathione. The presence of easA is not required to complete this reaction. Further conversion of agroclavine to paspalic acid is a two-step process involving oxidation of agroclavine to elymoclavine and of elymoclavine to paspalic acid, the second step being performed by the elymoclavine oxidase cloA. Paspalic acid is then further converted to D-lysergic acid. Ergovaline is assembled from D-lysergic acid and three different amino acids by the D-lysergyl-peptide-synthetase composed of a monomudular (lpsB) and a trimodular (lpsA) nonribosomal peptide synthetase subunit. The chain is D-lysergyl-peptide-synthetase subunit 1 from Epichloe festucae var. lolii (Neotyphodium lolii).